A 669-amino-acid polypeptide reads, in one-letter code: DNA ligase (669 aa).

NAD(+) is bound by residues 34–38 (DAEYD), 83–84 (SL), and Glu-114. The N6-AMP-lysine intermediate role is filled by Lys-116. Arg-137, Glu-171, Lys-287, and Lys-311 together coordinate NAD(+). Zn(2+) is bound by residues Cys-405, Cys-408, Cys-423, and Cys-428. The 79-residue stretch at 591-669 (NVESYFAGKT…EERFLQELNK (79 aa)) folds into the BRCT domain.

It belongs to the NAD-dependent DNA ligase family. LigA subfamily. Mg(2+) serves as cofactor. Mn(2+) is required as a cofactor.

The catalysed reaction is NAD(+) + (deoxyribonucleotide)n-3'-hydroxyl + 5'-phospho-(deoxyribonucleotide)m = (deoxyribonucleotide)n+m + AMP + beta-nicotinamide D-nucleotide.. Its function is as follows. DNA ligase that catalyzes the formation of phosphodiester linkages between 5'-phosphoryl and 3'-hydroxyl groups in double-stranded DNA using NAD as a coenzyme and as the energy source for the reaction. It is essential for DNA replication and repair of damaged DNA. The chain is DNA ligase from Bacillus cereus (strain ATCC 10987 / NRS 248).